The chain runs to 362 residues: Fructose-bisphosphate aldolase (362 aa).

S63 contacts D-glyceraldehyde 3-phosphate. D112 functions as the Proton donor in the catalytic mechanism. The Zn(2+) site is built by H113, D147, E177, and H229. Residue G230 coordinates dihydroxyacetone phosphate. H268 contributes to the Zn(2+) binding site. Dihydroxyacetone phosphate-binding positions include 269 to 271 (GGS) and 290 to 293 (NVDT).

This sequence belongs to the class II fructose-bisphosphate aldolase family. In terms of assembly, homodimer. Zn(2+) is required as a cofactor.

The catalysed reaction is beta-D-fructose 1,6-bisphosphate = D-glyceraldehyde 3-phosphate + dihydroxyacetone phosphate. It participates in carbohydrate degradation; glycolysis; D-glyceraldehyde 3-phosphate and glycerone phosphate from D-glucose: step 4/4. Catalyzes the aldol condensation of dihydroxyacetone phosphate (DHAP or glycerone-phosphate) with glyceraldehyde 3-phosphate (G3P) to form fructose 1,6-bisphosphate (FBP) in gluconeogenesis and the reverse reaction in glycolysis. This is Fructose-bisphosphate aldolase (fba) from Neurospora crassa (strain ATCC 24698 / 74-OR23-1A / CBS 708.71 / DSM 1257 / FGSC 987).